The primary structure comprises 105 residues: Large ribosomal subunit protein bL21 (105 aa).

Belongs to the bacterial ribosomal protein bL21 family. Part of the 50S ribosomal subunit. Contacts protein L20.

In terms of biological role, this protein binds to 23S rRNA in the presence of protein L20. This is Large ribosomal subunit protein bL21 from Methylobacterium sp. (strain 4-46).